The primary structure comprises 245 residues: MNSLKFKLTFYTLFGLIWSLLVFFFLSPWYEETLKKDIFELKQYKFSNFLILYDKIEYNKFDYVDGAETYFRDAFGFETKTLEGIMTSIKVLSTLAFLSTTFLIYFTIIFYVHIKFIFDTENHRRLGKKVWCYVLIGSPLVSFFLSFITLFLIIGIPSAVRNDCYKEYGKKFCNSQLRYHTSFIGENQVWLWGPSRGWIILMVDTILTFFATIYCWRNAHKFDEVKMKKKKKNYLNNNNNKNNIL.

The next 4 helical transmembrane spans lie at 10 to 30, 94 to 114, 134 to 154, and 196 to 216; these read FYTL…SPWY, TLAF…YVHI, VLIG…FLII, and RGWI…IYCW.

It is found in the membrane. This is an uncharacterized protein from Dictyostelium discoideum (Social amoeba).